We begin with the raw amino-acid sequence, 667 residues long: MIKQQIEELRQLLRHHEYQYHVLDNPQIPDSEYDRLFHQLKALEQQYPEYASENSPTQRVGAKPLSNFAQVKHDIPMLSLDNAFSDEDFFAFVKRIQDRLIHVHHSLTFCCEPKLDGLAVSILYINGQLVQAATRGDGTTGEDITANIRTIRNIPLQLLTDNPPTRLEVRGEVFMSQAGFEKLNKTALAKGEKTFANPRNAAAGSLRQLDPKITGQRPLMLNAYGIGIAEGVELPDTHFARLQWLKSIGIPVNNEIQLCHGIEKVLDFYRTIKQKRSSLGYDIDGTVLKINDIDLQQQLGFISKAPRWAIAYKFPAQEELTILNNVEFQVGRTGAITPVAKLEPVFVAGVTVSNATLHNGDEIARLDIAIGDTVIVRRAGDVIPQIIGVLHERRPENAKSIIFPTNCPVCDSVISKIEGEAVARCTGGLICAAQRKEALKHFVSRKAMDIDGIGAKLIEQLVERELVHTPADLFKLDQVTLMRLERMGAKSAENALASLAKAKKTTLARFIFALGIREVGETTALNLATHFKTLEAFENATFEQLQKVQDVGEVVAKRIRSFWSEPHNVAVVKDLIAQGIHWDNVEVKEVRDNPLKGKTVVLTGTLTKMGRSEAKEYLLQLGCKVSGSVSSKTDFVIAGESAGSKLTKATELGINILSENEFLALLA.

NAD(+) is bound by residues 30–34 (DSEYD), 79–80 (SL), and E112. K114 (N6-AMP-lysine intermediate) is an active-site residue. Residues R135, E172, K289, and K313 each coordinate NAD(+). 4 residues coordinate Zn(2+): C407, C410, C425, and C431. One can recognise a BRCT domain in the interval 590-667 (VRDNPLKGKT…SENEFLALLA (78 aa)).

The protein belongs to the NAD-dependent DNA ligase family. LigA subfamily. Mg(2+) is required as a cofactor. The cofactor is Mn(2+).

The catalysed reaction is NAD(+) + (deoxyribonucleotide)n-3'-hydroxyl + 5'-phospho-(deoxyribonucleotide)m = (deoxyribonucleotide)n+m + AMP + beta-nicotinamide D-nucleotide.. Functionally, DNA ligase that catalyzes the formation of phosphodiester linkages between 5'-phosphoryl and 3'-hydroxyl groups in double-stranded DNA using NAD as a coenzyme and as the energy source for the reaction. It is essential for DNA replication and repair of damaged DNA. The chain is DNA ligase from Histophilus somni (strain 2336) (Haemophilus somnus).